We begin with the raw amino-acid sequence, 125 residues long: MIVGTGVDLAEVDRIQRSIERYGDKFIKRIYTPGEIAYVERKANKFERYAARFAAKEAGMKAIGTGWRHGVRWQDFEVANLRTGKPTLLLHGVAARYAEKLGVKNIALSITHTAALGMAHVILEN.

Mg(2+) contacts are provided by Asp-8 and Glu-57.

This sequence belongs to the P-Pant transferase superfamily. AcpS family. The cofactor is Mg(2+).

Its subcellular location is the cytoplasm. It carries out the reaction apo-[ACP] + CoA = holo-[ACP] + adenosine 3',5'-bisphosphate + H(+). Its function is as follows. Transfers the 4'-phosphopantetheine moiety from coenzyme A to a Ser of acyl-carrier-protein. The protein is Holo-[acyl-carrier-protein] synthase of Solibacter usitatus (strain Ellin6076).